A 354-amino-acid chain; its full sequence is Type II methylase M.HgiDII (354 aa).

An SAM-dependent MTase C5-type domain is found at 3 to 344 (GAVIDLFCGV…KSIKRFLEGL (342 aa)). The active site involves Cys79.

It belongs to the class I-like SAM-binding methyltransferase superfamily. C5-methyltransferase family.

The enzyme catalyses a 2'-deoxycytidine in DNA + S-adenosyl-L-methionine = a 5-methyl-2'-deoxycytidine in DNA + S-adenosyl-L-homocysteine + H(+). Its function is as follows. A methylase that recognizes the double-stranded sequence 5'-GTCGAC-3', methylates C-? on both strands and protects the DNA from cleavage by the HgiDII endonuclease. This is Type II methylase M.HgiDII from Herpetosiphon aurantiacus (Herpetosiphon giganteus).